The chain runs to 43 residues: Structural protein ORF5a (43 aa).

The helical transmembrane segment at 2–22 (FSQIGAFLDSALLLLVAFFAV) threads the bilayer.

It belongs to the arteriviridae ORF5a protein family. In terms of assembly, interacts with proteins GP2B and GP4.

Its subcellular location is the virion. It localises to the host cell membrane. Minor virion component that plays an essential role in virus infectivity. The polypeptide is Structural protein ORF5a (Sus scrofa (Pig)).